The following is a 92-amino-acid chain: DNA-directed RNA polymerase subunit Rpo11 (92 aa).

This sequence belongs to the archaeal Rpo11/eukaryotic RPB11/RPC19 RNA polymerase subunit family. As to quaternary structure, part of the RNA polymerase complex.

The protein localises to the cytoplasm. It catalyses the reaction RNA(n) + a ribonucleoside 5'-triphosphate = RNA(n+1) + diphosphate. In terms of biological role, DNA-dependent RNA polymerase (RNAP) catalyzes the transcription of DNA into RNA using the four ribonucleoside triphosphates as substrates. This is DNA-directed RNA polymerase subunit Rpo11 from Methanosarcina acetivorans (strain ATCC 35395 / DSM 2834 / JCM 12185 / C2A).